Reading from the N-terminus, the 449-residue chain is tRNA-2-methylthio-N(6)-dimethylallyladenosine synthase (449 aa).

The region spanning 3–118 (KKVFVKTFGC…LPELLAQREA (116 aa)) is the MTTase N-terminal domain. Residues Cys-12, Cys-49, Cys-81, Cys-155, Cys-159, and Cys-162 each coordinate [4Fe-4S] cluster. Residues 141-376 (RVEGASAFVS…VINANIKSIS (236 aa)) enclose the Radical SAM core domain. One can recognise a TRAM domain in the interval 377–440 (ESRVGTVQRI…AYTLRGEVVT (64 aa)).

It belongs to the methylthiotransferase family. MiaB subfamily. As to quaternary structure, monomer. The cofactor is [4Fe-4S] cluster.

It is found in the cytoplasm. The enzyme catalyses N(6)-dimethylallyladenosine(37) in tRNA + (sulfur carrier)-SH + AH2 + 2 S-adenosyl-L-methionine = 2-methylsulfanyl-N(6)-dimethylallyladenosine(37) in tRNA + (sulfur carrier)-H + 5'-deoxyadenosine + L-methionine + A + S-adenosyl-L-homocysteine + 2 H(+). Functionally, catalyzes the methylthiolation of N6-(dimethylallyl)adenosine (i(6)A), leading to the formation of 2-methylthio-N6-(dimethylallyl)adenosine (ms(2)i(6)A) at position 37 in tRNAs that read codons beginning with uridine. The sequence is that of tRNA-2-methylthio-N(6)-dimethylallyladenosine synthase from Paracidovorax citrulli (strain AAC00-1) (Acidovorax citrulli).